A 75-amino-acid polypeptide reads, in one-letter code: Beta-defensin 30 (75 aa).

An N-terminal signal peptide occupies residues 1–22 (MGSLQLILVLFVLLSDVPPVRS). Disulfide bonds link cysteine 35-cysteine 62, cysteine 42-cysteine 56, and cysteine 46-cysteine 63.

It belongs to the beta-defensin family.

It localises to the secreted. Its function is as follows. Has antibacterial activity. The chain is Beta-defensin 30 (Defb30) from Rattus norvegicus (Rat).